The sequence spans 155 residues: Protein SprT-like (155 aa).

The SprT-like domain maps to Gln7–Ile145. His67 is a binding site for Zn(2+). Glu68 is a catalytic residue. Zn(2+) is bound at residue His71.

This sequence belongs to the SprT family. Zn(2+) serves as cofactor.

It localises to the cytoplasm. In Listeria monocytogenes serotype 4a (strain HCC23), this protein is Protein SprT-like.